Consider the following 251-residue polypeptide: Hydroxyacylglutathione hydrolase (251 aa).

Residues H53, H55, D57, H58, H110, D127, and H165 each contribute to the Zn(2+) site.

Belongs to the metallo-beta-lactamase superfamily. Glyoxalase II family. In terms of assembly, monomer. The cofactor is Zn(2+).

It carries out the reaction an S-(2-hydroxyacyl)glutathione + H2O = a 2-hydroxy carboxylate + glutathione + H(+). It functions in the pathway secondary metabolite metabolism; methylglyoxal degradation; (R)-lactate from methylglyoxal: step 2/2. Functionally, thiolesterase that catalyzes the hydrolysis of S-D-lactoyl-glutathione to form glutathione and D-lactic acid. The chain is Hydroxyacylglutathione hydrolase from Citrobacter koseri (strain ATCC BAA-895 / CDC 4225-83 / SGSC4696).